The following is a 168-amino-acid chain: MRLTEKSEGEQQLKPNNSNAPNEDQEEEIQQSEQHTPARQRTQRADTQPSRCRLPSRRTPTTSSDRTINLLEVLPWPTEWIFNPYRLPALFELYPEFLLVFKEAFHDISHCLKAQMEKIGLPIILHLFALSTLYFYKFFLPTILSLSFFILLVLLLLLFIIVFILIFF.

The segment covering 1 to 11 (MRLTEKSEGEQ) has biased composition (basic and acidic residues). The disordered stretch occupies residues 1–63 (MRLTEKSEGE…LPSRRTPTTS (63 aa)). 2 stretches are compositionally biased toward polar residues: residues 13–22 (LKPNNSNAPN) and 35–48 (HTPA…ADTQ). Residues 49-63 (PSRCRLPSRRTPTTS) show a composition bias toward low complexity. 2 helical membrane passes run 119–139 (IGLP…YKFF) and 148–168 (FFIL…LIFF).

The protein localises to the membrane. This chain is Transmembrane protein 31 (TMEM31), found in Homo sapiens (Human).